The sequence spans 745 residues: Bacteriophage N4 adsorption protein B (745 aa).

3 helical membrane-spanning segments follow: residues 8–28 (FATW…IMFI), 362–382 (ISNF…LLLA), and 393–413 (FLSI…NFGL).

It is found in the cell inner membrane. Functionally, required for bacteriophage N4 adsorption. May be a component of the phage receptor. The chain is Bacteriophage N4 adsorption protein B (nfrB) from Escherichia coli O157:H7.